The primary structure comprises 224 residues: 7-cyano-7-deazaguanine synthase (224 aa).

10–20 is an ATP binding site; the sequence is LSGGLDSATVV. Cys-189, Cys-199, Cys-202, and Cys-205 together coordinate Zn(2+).

It belongs to the QueC family. Requires Zn(2+) as cofactor.

The catalysed reaction is 7-carboxy-7-deazaguanine + NH4(+) + ATP = 7-cyano-7-deazaguanine + ADP + phosphate + H2O + H(+). It participates in purine metabolism; 7-cyano-7-deazaguanine biosynthesis. Functionally, catalyzes the ATP-dependent conversion of 7-carboxy-7-deazaguanine (CDG) to 7-cyano-7-deazaguanine (preQ(0)). This is 7-cyano-7-deazaguanine synthase from Pseudomonas paraeruginosa (strain DSM 24068 / PA7) (Pseudomonas aeruginosa (strain PA7)).